Here is a 377-residue protein sequence, read N- to C-terminus: Adenosine 3'-phospho 5'-phosphosulfate transporter 2 (377 aa).

Helical transmembrane passes span 50–70 (LCCGGVFALYLVYGYMQELIF), 77–97 (PYGWYLTLVQFAYYTAFGYIE), 115–135 (ALLAFLTLGTMGLSNSSVGYL), 138–158 (PTQVIFKCCKLIPVLIGSVLI), 164–184 (GPMDFFAATAMCLGLILFTLA), 195–215 (FGVFLISLALLCDAAIGNVQE), 228–248 (VVIYSYGIGFVYLAVIMLLSG), 266–286 (GYAFLFSLTGYLGIQIVLTLV), 293–313 (LAATVTTARKAVTIALSFVFF), and 317–337 (FTIQYLWSGLIVVFGIYLNVY).

Belongs to the nucleotide-sugar transporter family. SLC35B subfamily.

Its subcellular location is the golgi apparatus membrane. Mediates the transport of adenosine 3'-phospho 5'-phosphosulfate (PAPS), from cytosol into Golgi. PAPS is a universal sulfuryl donor for sulfation events that take place in the Golgi. Essential for viability. Involved in glycosaminoglycan synthesis and the subsequent signaling. May be involved in hh and dpp signaling by controlling the sulfation of heparan sulfate (HS). The chain is Adenosine 3'-phospho 5'-phosphosulfate transporter 2 from Anopheles gambiae (African malaria mosquito).